A 157-amino-acid polypeptide reads, in one-letter code: 2-C-methyl-D-erythritol 2,4-cyclodiphosphate synthase (157 aa).

2 residues coordinate a divalent metal cation: D8 and H10. 4-CDP-2-C-methyl-D-erythritol 2-phosphate-binding positions include 8–10 (DVH) and 34–35 (HS). An a divalent metal cation-binding site is contributed by H42. 4-CDP-2-C-methyl-D-erythritol 2-phosphate is bound by residues 56–58 (DIG), 61–65 (FPDTD), 132–135 (TTEE), and F139.

The protein belongs to the IspF family. In terms of assembly, homotrimer. A divalent metal cation is required as a cofactor.

It catalyses the reaction 4-CDP-2-C-methyl-D-erythritol 2-phosphate = 2-C-methyl-D-erythritol 2,4-cyclic diphosphate + CMP. The protein operates within isoprenoid biosynthesis; isopentenyl diphosphate biosynthesis via DXP pathway; isopentenyl diphosphate from 1-deoxy-D-xylulose 5-phosphate: step 4/6. In terms of biological role, involved in the biosynthesis of isopentenyl diphosphate (IPP) and dimethylallyl diphosphate (DMAPP), two major building blocks of isoprenoid compounds. Catalyzes the conversion of 4-diphosphocytidyl-2-C-methyl-D-erythritol 2-phosphate (CDP-ME2P) to 2-C-methyl-D-erythritol 2,4-cyclodiphosphate (ME-CPP) with a corresponding release of cytidine 5-monophosphate (CMP). This chain is 2-C-methyl-D-erythritol 2,4-cyclodiphosphate synthase, found in Clostridium botulinum (strain Eklund 17B / Type B).